A 428-amino-acid chain; its full sequence is Light-independent protochlorophyllide reductase subunit N (428 aa).

Residues C29, C54, and C115 each contribute to the [4Fe-4S] cluster site.

Belongs to the BchN/ChlN family. In terms of assembly, protochlorophyllide reductase is composed of three subunits; BchL, BchN and BchB. Forms a heterotetramer of two BchB and two BchN subunits. It depends on [4Fe-4S] cluster as a cofactor.

It carries out the reaction chlorophyllide a + oxidized 2[4Fe-4S]-[ferredoxin] + 2 ADP + 2 phosphate = protochlorophyllide a + reduced 2[4Fe-4S]-[ferredoxin] + 2 ATP + 2 H2O. Its pathway is porphyrin-containing compound metabolism; bacteriochlorophyll biosynthesis (light-independent). In terms of biological role, component of the dark-operative protochlorophyllide reductase (DPOR) that uses Mg-ATP and reduced ferredoxin to reduce ring D of protochlorophyllide (Pchlide) to form chlorophyllide a (Chlide). This reaction is light-independent. The NB-protein (BchN-BchB) is the catalytic component of the complex. In Roseobacter denitrificans (strain ATCC 33942 / OCh 114) (Erythrobacter sp. (strain OCh 114)), this protein is Light-independent protochlorophyllide reductase subunit N.